The chain runs to 50 residues: U37-theraphotoxin-Cg1b (50 aa).

The N-terminal stretch at 1–19 (MRVLLIIAGLALLSVVCYT) is a signal peptide.

Belongs to the neurotoxin 10 (Hwtx-1) family. 67 (Jztx-67) subfamily. In terms of tissue distribution, expressed by the venom gland.

Its subcellular location is the secreted. This chain is U37-theraphotoxin-Cg1b, found in Chilobrachys guangxiensis (Chinese earth tiger tarantula).